Here is a 2111-residue protein sequence, read N- to C-terminus: Fatty acid synthase beta subunit aflB (2111 aa).

The acetyltransferase (AT) domain stretch occupies residues Ile-200–Leu-565. Residues Ser-618 to Asp-863 form an enoyl reductase (ER) domain region. The interval Gly-1195–Ile-1688 is dehydratase (DH) domain. Residues Glu-1606–Ser-1708 form the MaoC-like domain. Positions Tyr-1727–Ser-2091 are malonyl/palmitoyl transferase (MT/PT) domain.

This sequence belongs to the fungal fatty acid synthetase subunit beta family. [Alpha(6)beta(6)] hexamers of two multifunctional subunits (alpha and beta).

The catalysed reaction is acetyl-CoA + n malonyl-CoA + 2n NADPH + 4n H(+) = a long-chain-acyl-CoA + n CoA + n CO2 + 2n NADP(+).. It catalyses the reaction holo-[ACP] + acetyl-CoA = acetyl-[ACP] + CoA. It carries out the reaction holo-[ACP] + malonyl-CoA = malonyl-[ACP] + CoA. The enzyme catalyses a (3R)-hydroxyacyl-[ACP] = a (2E)-enoyl-[ACP] + H2O. The catalysed reaction is a 2,3-saturated acyl-[ACP] + NAD(+) = a (2E)-enoyl-[ACP] + NADH + H(+). It catalyses the reaction (9Z)-octadecenoyl-[ACP] + H2O = (9Z)-octadecenoate + holo-[ACP] + H(+). The protein operates within secondary metabolite biosynthesis. In terms of biological role, fatty acid synthase beta subunit; part of the gene cluster that mediates the biosynthesis of aspercryptins, linear lipopeptides built from six amino acids including 2 highly unusual and nonproteogenic amino acids, 2-amino-octanoic acid (2aoa) and 2-amino-dodecanol (2adol). The core structure of aspercryptins is as follows: Ser/Ala-Thr-Ile/Val-2aoa-Asn-2adol. The first step of aspercryptin biosynthesis is the generation of the fatty acid precursors, octanoic and dodecanoic acids, by the FAS subunits atnF and atnM. The fatty acid precursors are likely transformed into the corresponding alpha-amino fatty acids in three steps. First, they are hydroxylated by the cytochrome P450 monooxygenase atnE, then oxidized to the corresponding alpha-keto acids by the NAD(P)-dependent oxidoreductase atnD, and finally converted to the alpha-amino fatty acids by the PLP-dependent aminotransferases atnH or atnJ. the alpha-amino fatty acids, 2-amino-octanoic and 2-amino-dodecanoic acids, are recognized, activated, and covalently tethered to the NRPS atnA by its fourth and sixth adenylation domains. The second module of atnA is the Thr module and contains an epimerase (E) domain responsible for the epimerization of Thr to D-allo-Thr. Additionally, despite atnA having only one epimerase domain, the first amino acid of aspercryptin A1 is D-Ser, suggesting that serine is either loaded directly as D-Ser on the first module or that the epimerase domain in the threonine module epimerizes both L-Ser and L-Thr. After condensation of the hexapeptide of aspercryptin, the C-terminal reductase (TE) domain might be involved in the reductive release and production of the aldehyde hexapeptide. Further reduction would generate aspercryptins. The variety of aspercryptins produced reflects the flexibility of the atnA NRPS, allowing incorporation of alanine instead of serine, valine for isoleucine, and a C10 fatty amino alcohol instead of the C12 version. AtnB seems to be involved in the selectivity for Ile versus Val by the third module. Moreover, type B, C and D aspercryptins have an additional N-terminal cichorine, acetyl and propionyl group respectively. The chain is Fatty acid synthase beta subunit aflB from Emericella nidulans (strain FGSC A4 / ATCC 38163 / CBS 112.46 / NRRL 194 / M139) (Aspergillus nidulans).